The chain runs to 244 residues: Ribosomal RNA small subunit methyltransferase NEP1 (244 aa).

The interval 1-34 (MAAPSDGFKPRERSGGEQAQDWDALPPKRPRLGA) is disordered. Residue alanine 2 is modified to N-acetylalanine. 2 positions are modified to phosphoserine: serine 5 and serine 14. Residues threonine 176, glycine 201, glycine 206, and 219–224 (ISNYPL) contribute to the S-adenosyl-L-methionine site.

The protein belongs to the class IV-like SAM-binding methyltransferase superfamily. RNA methyltransferase NEP1 family. In terms of assembly, homodimer. Part of the small subunit (SSU) processome, composed of more than 70 proteins and the RNA chaperone small nucleolar RNA (snoRNA) U3.

Its subcellular location is the nucleus. The protein localises to the nucleolus. It carries out the reaction pseudouridine(1248) in human 18S rRNA + S-adenosyl-L-methionine = N(1)-methylpseudouridine(1248) in human 18S rRNA + S-adenosyl-L-homocysteine + H(+). In terms of biological role, S-adenosyl-L-methionine-dependent pseudouridine N(1)-methyltransferase that methylates pseudouridine at position 1248 (Psi1248) in 18S rRNA. Involved the biosynthesis of the hypermodified N1-methyl-N3-(3-amino-3-carboxypropyl) pseudouridine (m1acp3-Psi) conserved in eukaryotic 18S rRNA. Is not able to methylate uridine at this position. Also has an essential role in 40S ribosomal subunit biogenesis independent on its methyltransferase activity, facilitating the incorporation of ribosomal protein S19 during the formation of pre-ribosomes. Part of the small subunit (SSU) processome, first precursor of the small eukaryotic ribosomal subunit. During the assembly of the SSU processome in the nucleolus, many ribosome biogenesis factors, an RNA chaperone and ribosomal proteins associate with the nascent pre-rRNA and work in concert to generate RNA folding, modifications, rearrangements and cleavage as well as targeted degradation of pre-ribosomal RNA by the RNA exosome. In Homo sapiens (Human), this protein is Ribosomal RNA small subunit methyltransferase NEP1.